A 736-amino-acid polypeptide reads, in one-letter code: Segment polarity protein dishevelled homolog DVL-2 (736 aa).

One can recognise a DIX domain in the interval 1–82 (MAETKVIYHL…RVVSWLASSE (82 aa)). Positions 79–241 (ASSEGSQPDS…PRLERTSSFS (163 aa)) are disordered. Residues 100-114 (EPPPPVPPPIPPPPA) are compositionally biased toward pro residues. The span at 149–160 (MRRDRVRRRESS) shows a compositional bias: basic and acidic residues. Positions 181-195 (ESSSTLLTSEIETSI) are enriched in low complexity. The span at 205-217 (SRFSSSTEQSSAS) shows a compositional bias: polar residues. Positions 219–231 (LLKRHRRRRKQRP) are enriched in basic residues. The 73-residue stretch at 254–326 (TVTLNMEKYN…NDDAVRVLRD (73 aa)) folds into the PDZ domain. The interaction with custos stretch occupies residues 327–427 (IVHKPGPIVL…LASVVKVMAS (101 aa)). The 75-residue stretch at 428–502 (PESGLEVRDR…SEQCYYIFGD (75 aa)) folds into the DEP domain. Low complexity-rich tracts occupy residues 574–593 (MGSAGSQHSEGSRSSGSNRS) and 616–629 (KSGSGSESEYSTRS). Positions 574-664 (MGSAGSQHSE…HPPSVHSYAA (91 aa)) are disordered.

The protein belongs to the DSH family. As to quaternary structure, can form homomultimers. Interacts with prickle1. Interacts (via PDZ domain) with ccdc88c/dal and dact1-B/dpr. Interacts (via DIX domain) with ARP/Axin-related protein and dact1-A/frodo. Interacts with sdc4, possibly via fz7. Interacts directly (via DEP domain) with efnb1/ephrin-B1 and indirectly with the phosphorylated ephrin receptors ephb1 and ephb2, via association with SH domain-containing adapters. May interact with lrrc6. Interacts with custos (via NLS1 and NLS2); the interaction is negatively regulated by Wnt stimulation. Phosphorylated. Phosphorylation is controlled by frizzled proteins, correlates with the onset of embryo dorsalizing events and is higher in the dorsal half of early cleavage embryos. Phosphorylated on tyrosine residues in response to association with efnb1/ephrin-B1. Expressed equally in both animal-vegetal and dorsal-ventral directions of the early blastula. Becomes enriched on the dorsal side of the embryo after cortical rotation. Expressed along the anterior margin of eye field of neurulae (stage 16 embryos) and in the anterolateral crescent that borders the eye field. Continues to be expressed in the optic cup at stage 26. Expressed in the central nervous system throughout the early tailbud stage including the entire hindbrain.

It is found in the cytoplasm. Its subcellular location is the cytoplasmic vesicle. The protein localises to the cell projection. It localises to the cilium. The protein resides in the nucleus. It is found in the cell membrane. Involved in at least 2 independent signaling cascades, controlling cell fate via canonical Wnt signaling and cell polarity via a planar cell polarity (PCP) cascade. Acts synergistically with dal/dapple-like to activate Wnt signaling, stabilizing ctnnb1/beta-catenin and leading to dorsal axis formation. Also prevents degradation of ctnnb1/beta-catenin by displacing gsk3 from a complex with ARP/Axin-related protein. Has an additional role in anterior-posterior (A/P) axis formation, specifying different neuroectodermal cell fates along the A/P axis in a dose-dependent manner by activating several early patterning genes. In the PCP pathway, required at the cell membrane for PCP-mediated neural and mesodermal convergent extension during gastrulation and subsequent neural tube closure, acting to activate jnk. Also involved in blastopore closure and archenteron elongation during early, but not late, gastrulation. Associates with ephrin receptors and ligands and acts as part of a downstream PCP pathway to mediate ephrin-mediated cell repulsion via activation of rhoa. Required for efnb1/ephrin-B1-driven movement of non-retinal progenitor cells into the retina during eye field formation. Patterns the hindbrain. Required for ciliogenesis. Controls the docking of basal bodies to the apical plasma membrane; mediates the activation, but not localization of rhoa at the apical surface of ciliated cells during basal body docking. Furthermore, required for the association of basal bodies with membrane-bound vesicles and the vesicle-trafficking protein exoc4/sec8, and this association is in turn required for basal body docking. Once basal bodies are docked, required for the planar polarization of basal bodies that underlies ciliary beating and the directional fluid flow across ciliated epithelia. This chain is Segment polarity protein dishevelled homolog DVL-2 (dvl2), found in Xenopus laevis (African clawed frog).